Consider the following 152-residue polypeptide: Ubiquitin-conjugating enzyme E2 1 (152 aa).

Positions 4–150 constitute a UBC core domain; that stretch reads PARKRLMRDF…VRDVVEQSWT (147 aa). Cysteine 88 serves as the catalytic Glycyl thioester intermediate. A disordered region spans residues 119–152; sequence NSPANSEAARMYSESKREYNRRVRDVVEQSWTAD. Basic and acidic residues predominate over residues 131 to 145; sequence SESKREYNRRVRDVV.

Belongs to the ubiquitin-conjugating enzyme family. Ubiquitously expressed.

The catalysed reaction is S-ubiquitinyl-[E1 ubiquitin-activating enzyme]-L-cysteine + [E2 ubiquitin-conjugating enzyme]-L-cysteine = [E1 ubiquitin-activating enzyme]-L-cysteine + S-ubiquitinyl-[E2 ubiquitin-conjugating enzyme]-L-cysteine.. The protein operates within protein modification; protein ubiquitination. Functionally, accepts the ubiquitin from the E1 complex and catalyzes its covalent attachment to other proteins. The polypeptide is Ubiquitin-conjugating enzyme E2 1 (UBC1) (Arabidopsis thaliana (Mouse-ear cress)).